Reading from the N-terminus, the 302-residue chain is N(G),N(G)-dimethylarginine dimethylaminohydrolase (302 aa).

Substrate-binding residues include Asp102, Arg127, and Arg172. Residue His201 is the Proton donor of the active site. The active-site Nucleophile is Cys295.

Belongs to the DDAH family.

The catalysed reaction is N(omega),N(omega)-dimethyl-L-arginine + H2O = dimethylamine + L-citrulline. The enzyme catalyses N(omega)-methyl-L-arginine + H2O = L-citrulline + methylamine. Hydrolyzes N(G),N(G)-dimethyl-L-arginine (ADMA) and N(G)-monomethyl-L-arginine (MMA). In Mycobacterium tuberculosis (strain ATCC 25618 / H37Rv), this protein is N(G),N(G)-dimethylarginine dimethylaminohydrolase.